The chain runs to 802 residues: Chondroitin sulfate synthase 1 (802 aa).

Topologically, residues 1–7 (MAARGRR) are cytoplasmic. The helical; Signal-anchor for type II membrane protein transmembrane segment at 8–28 (AWLSVLLGLVLGFVLASRLVL) threads the bilayer. Topologically, residues 29-802 (PRASELKRAG…SNNNGSVRTA (774 aa)) are lumenal. The segment at 34–82 (LKRAGPRRRASPEGCRSGQAAASQAGGARGDARGAQLWPPGSDPDGGPR) is disordered. Low complexity-rich tracts occupy residues 49–59 (RSGQAAASQAG) and 66–78 (RGAQ…SDPD). 2 N-linked (GlcNAc...) asparagine glycosylation sites follow: asparagine 189 and asparagine 623. 2 residues coordinate a divalent metal cation: aspartate 633 and histidine 747. The N-linked (GlcNAc...) asparagine glycan is linked to asparagine 796.

Belongs to the chondroitin N-acetylgalactosaminyltransferase family. Co(2+) is required as a cofactor. Mn(2+) serves as cofactor. It depends on Cd(2+) as a cofactor. In terms of tissue distribution, ubiquitous, with the highest levels in placenta. Detected at low levels in brain, heart, skeletal muscle, colon, thymus, spleen, kidney, liver, adrenal gland, mammary gland, stomach, small intestine, lung and peripheral blood leukocytes.

Its subcellular location is the golgi apparatus. It localises to the golgi stack membrane. It is found in the secreted. The catalysed reaction is 3-O-(beta-D-GlcA-(1-&gt;3)-beta-D-GalNAc-(1-&gt;4)-beta-D-GlcA-(1-&gt;3)-beta-D-Gal-(1-&gt;3)-beta-D-Gal-(1-&gt;4)-beta-D-Xyl)-L-seryl-[protein] + UDP-N-acetyl-alpha-D-galactosamine = 3-O-(beta-D-GalNAc-(1-&gt;4)-beta-D-GlcA-(1-&gt;3)-beta-D-GalNAc-(1-&gt;4)-beta-D-GlcA-(1-&gt;3)-beta-D-Gal-(1-&gt;3)-beta-D-Gal-(1-&gt;4)-beta-D-Xyl)-L-seryl-[protein] + UDP + H(+). It catalyses the reaction 3-O-{beta-D-GlcA-(1-&gt;3)-[beta-D-GalNAc-(1-&gt;4)-beta-D-GlcA-(1-&gt;3)](n)-beta-D-GalNAc-(1-&gt;4)-beta-D-GlcA-(1-&gt;3)-beta-D-Gal-(1-&gt;3)-beta-D-Gal-(1-&gt;4)-beta-D-Xyl}-L-seryl-[protein] + UDP-N-acetyl-alpha-D-galactosamine = 3-O-{[beta-D-GalNAc-(1-&gt;4)-beta-D-GlcA-(1-&gt;3)](n+1)-beta-D-GalNAc-(1-&gt;4)-beta-D-GlcA-(1-&gt;3)-beta-D-Gal-(1-&gt;3)-beta-D-Gal-(1-&gt;4)-beta-D-Xyl}-L-seryl-[protein] + UDP + H(+). The enzyme catalyses 3-O-(beta-D-GalNAc-(1-&gt;4)-beta-D-GlcA-(1-&gt;3)-beta-D-Gal-(1-&gt;3)-beta-D-Gal-(1-&gt;4)-beta-D-Xyl)-L-seryl-[protein] + UDP-alpha-D-glucuronate = 3-O-(beta-D-GlcA-(1-&gt;3)-beta-D-GalNAc-(1-&gt;4)-beta-D-GlcA-(1-&gt;3)-beta-D-Gal-(1-&gt;3)-beta-D-Gal-(1-&gt;4)-beta-D-Xyl)-L-seryl-[protein] + UDP + H(+). It carries out the reaction 3-O-{[beta-D-GalNAc-(1-&gt;4)-beta-D-GlcA-(1-&gt;3)](n)-beta-D-GalNAc-(1-&gt;4)-beta-D-GlcA-(1-&gt;3)-beta-D-Gal-(1-&gt;3)-beta-D-Gal-(1-&gt;4)-beta-D-Xyl}-L-seryl-[protein] + UDP-alpha-D-glucuronate = 3-O-{beta-D-GlcA-(1-&gt;3)-[beta-D-GalNAc-(1-&gt;4)-beta-D-GlcA-(1-&gt;3)](n)-beta-D-GalNAc-(1-&gt;4)-beta-D-GlcA-(1-&gt;3)-beta-D-Gal-(1-&gt;3)-beta-D-Gal-(1-&gt;4)-beta-D-Xyl}-L-seryl-[protein] + UDP + H(+). In terms of biological role, has both beta-1,3-glucuronic acid and beta-1,4-N-acetylgalactosamine transferase activity. Transfers glucuronic acid (GlcUA) from UDP-GlcUA and N-acetylgalactosamine (GalNAc) from UDP-GalNAc to the non-reducing end of the elongating chondroitin polymer. Involved in the negative control of osteogenesis likely through the modulation of NOTCH signaling. The polypeptide is Chondroitin sulfate synthase 1 (Homo sapiens (Human)).